A 393-amino-acid chain; its full sequence is METFLFTSESVNEGHPDKLCDQVSDAVLDACLAQDPESKVACETCTKTNLVMVFGEITTKANIDYEKIVRDTCREIGFVSPDVGLDADNCRVLVNIEQQSPDIAQGVHGHLTKRPEEIGAGDQGHMFGYATDETPELMPLSHVLATKLGARLTEVRKNGTCSWLRPDGKTQVTVEYHNDNGAMVPLRVHTVLISTQHDETVTNDEIARDLKEHVIKPVIPEKYLDENTIFHLNPSGRFVIGGPHGDAGLTGRKIIIDTYGGWGAHGGGAFSGKDPTKVDRSGAYIVRQAAKSIVANGLARRCIVQVSYAIGVPEPLSVFVDTYGTGKIPDKEILNIVKENFDFRPGMISINLDLLRGGNGRFLKTAAYGHFGRDDPDFTWEVVKPLKWDKPEA.

Glutamate 9 is a Mg(2+) binding site. Residue histidine 15 participates in ATP binding. Glutamate 43 contributes to the K(+) binding site. L-methionine contacts are provided by glutamate 56 and glutamine 99. ATP contacts are provided by residues 167 to 169, 235 to 238, aspartate 246, 252 to 253, alanine 269, lysine 273, and lysine 277; these read DGK, SGRF, and RK. Aspartate 246 lines the L-methionine pocket. Lysine 277 is a binding site for L-methionine.

This sequence belongs to the AdoMet synthase family. Homotetramer. Mn(2+) is required as a cofactor. The cofactor is Mg(2+). Co(2+) serves as cofactor. It depends on K(+) as a cofactor. Mostly expressed in roots. Also present in stems and leaves.

The protein localises to the cytoplasm. The catalysed reaction is L-methionine + ATP + H2O = S-adenosyl-L-methionine + phosphate + diphosphate. Its pathway is amino-acid biosynthesis; S-adenosyl-L-methionine biosynthesis; S-adenosyl-L-methionine from L-methionine: step 1/1. In terms of biological role, catalyzes the formation of S-adenosylmethionine from methionine and ATP. The reaction comprises two steps that are both catalyzed by the same enzyme: formation of S-adenosylmethionine (AdoMet) and triphosphate, and subsequent hydrolysis of the triphosphate. This chain is S-adenosylmethionine synthase 2 (SAM2), found in Solanum lycopersicum (Tomato).